An 87-amino-acid chain; its full sequence is CRISPR-associated endoribonuclease Cas2 (87 aa).

Residue Asp-8 coordinates Mg(2+).

The protein belongs to the CRISPR-associated endoribonuclease Cas2 protein family. As to quaternary structure, homodimer, forms a heterotetramer with a Cas1 homodimer. It depends on Mg(2+) as a cofactor.

Its function is as follows. CRISPR (clustered regularly interspaced short palindromic repeat), is an adaptive immune system that provides protection against mobile genetic elements (viruses, transposable elements and conjugative plasmids). CRISPR clusters contain sequences complementary to antecedent mobile elements and target invading nucleic acids. CRISPR clusters are transcribed and processed into CRISPR RNA (crRNA). Functions as a ssRNA-specific endoribonuclease. Involved in the integration of spacer DNA into the CRISPR cassette. The protein is CRISPR-associated endoribonuclease Cas2 of Frankia alni (strain DSM 45986 / CECT 9034 / ACN14a).